The chain runs to 603 residues: Adenine deaminase (603 aa).

It belongs to the metallo-dependent hydrolases superfamily. Adenine deaminase family. The cofactor is Mn(2+).

The enzyme catalyses adenine + H2O + H(+) = hypoxanthine + NH4(+). This chain is Adenine deaminase, found in Ruegeria pomeroyi (strain ATCC 700808 / DSM 15171 / DSS-3) (Silicibacter pomeroyi).